Consider the following 590-residue polypeptide: MRTTHIEDRDNNSLENKHTDHIEGVENGKGTQEPPSPSGFGGHLIDENLVHVEGEDKVTWYLCFLISASAIAGFLFGYDTGVVGVALPLVGTDLGGNELNSSQQEIITAGTTIGAIFGSAILGGWGDHLGRKMAILISDVFFTVGAVIIASSYSVPQIIVGRIVLGVGVGGAAVIAPLFITETAPTAVRGRCIGVNAFFIPFGQLVADSIGAGVQNMHGGWRLLFALGAVPSLIQLLLFHYLPESPRILIVKGDIDRARNVFQRIYPTATHEMVDYKLRVAQEYVAATTALQSGTTFWERVKKVWKTGSYRRSIIAVSVLQAAGQLCGFNTLLYYAGTLFGLLGLSNPALGGLIPAGTNAVFVLIGMSTVDKIGRRGLLLVGVPVLLLGLVWNIIGFYYMCKPTGGFLDTSYSYDTTNVGIVIGGIVFYVAGFGLTYSHLVWYQAEYLALEVRSMGSGVATTVCWIANLVVSVSYLSELETMTPSGTYGFYLGLSVIAFVFVVFCFPETKQLSIDETSLLFENDWGVKRSVQMRKERHETRKRFKDVELAEAATAHFEARQQKSASVSPAELSKFMAGLKGGKRKPQVLV.

Basic and acidic residues predominate over residues 1–26; that stretch reads MRTTHIEDRDNNSLENKHTDHIEGVE. The disordered stretch occupies residues 1–40; that stretch reads MRTTHIEDRDNNSLENKHTDHIEGVENGKGTQEPPSPSGF. Residues 1–57 are Cytoplasmic-facing; that stretch reads MRTTHIEDRDNNSLENKHTDHIEGVENGKGTQEPPSPSGFGGHLIDENLVHVEGEDK. Residues 58-78 traverse the membrane as a helical segment; it reads VTWYLCFLISASAIAGFLFGY. Residues 79-105 are Extracellular-facing; it reads DTGVVGVALPLVGTDLGGNELNSSQQE. Residue Asn100 is glycosylated (N-linked (GlcNAc...) asparagine). The chain crosses the membrane as a helical span at residues 106-126; sequence IITAGTTIGAIFGSAILGGWG. Residues 127 to 132 lie on the Cytoplasmic side of the membrane; the sequence is DHLGRK. Residues 133 to 153 form a helical membrane-spanning segment; sequence MAILISDVFFTVGAVIIASSY. Topologically, residues 154–157 are extracellular; it reads SVPQ. A helical transmembrane segment spans residues 158-178; the sequence is IIVGRIVLGVGVGGAAVIAPL. At 179–192 the chain is on the cytoplasmic side; sequence FITETAPTAVRGRC. Residues 193–213 form a helical membrane-spanning segment; the sequence is IGVNAFFIPFGQLVADSIGAG. Topologically, residues 214–222 are extracellular; that stretch reads VQNMHGGWR. A helical transmembrane segment spans residues 223–243; that stretch reads LLFALGAVPSLIQLLLFHYLP. Over 244–325 the chain is Cytoplasmic; that stretch reads ESPRILIVKG…AVSVLQAAGQ (82 aa). A helical membrane pass occupies residues 326–346; the sequence is LCGFNTLLYYAGTLFGLLGLS. The Extracellular portion of the chain corresponds to 347 to 349; that stretch reads NPA. The chain crosses the membrane as a helical span at residues 350 to 370; sequence LGGLIPAGTNAVFVLIGMSTV. The Cytoplasmic portion of the chain corresponds to 371–376; the sequence is DKIGRR. Residues 377-397 traverse the membrane as a helical segment; sequence GLLLVGVPVLLLGLVWNIIGF. The Extracellular segment spans residues 398-420; sequence YYMCKPTGGFLDTSYSYDTTNVG. Residues 421-441 form a helical membrane-spanning segment; it reads IVIGGIVFYVAGFGLTYSHLV. Over 442–455 the chain is Cytoplasmic; sequence WYQAEYLALEVRSM. A helical membrane pass occupies residues 456 to 476; it reads GSGVATTVCWIANLVVSVSYL. Topologically, residues 477-485 are extracellular; it reads SELETMTPS. Residues 486–506 form a helical membrane-spanning segment; that stretch reads GTYGFYLGLSVIAFVFVVFCF. Over 507-590 the chain is Cytoplasmic; it reads PETKQLSIDE…GGKRKPQVLV (84 aa).

This sequence belongs to the major facilitator superfamily. Sugar transporter (TC 2.A.1.1) family.

Its subcellular location is the cell membrane. It carries out the reaction myo-inositol(out) + H(+)(out) = myo-inositol(in) + H(+)(in). In terms of biological role, transporter for myo-inositol. The protein is Myo-inositol transporter 3 of Cryptococcus neoformans var. grubii serotype A (strain H99 / ATCC 208821 / CBS 10515 / FGSC 9487) (Filobasidiella neoformans var. grubii).